The following is a 163-amino-acid chain: Large ribosomal subunit protein bL17 (163 aa).

The tract at residues Val127–Glu163 is disordered. Basic residues predominate over residues Lys129–Lys138. The span at Glu142 to Thr154 shows a compositional bias: low complexity.

The protein belongs to the bacterial ribosomal protein bL17 family. Part of the 50S ribosomal subunit. Contacts protein L32.

This Bacteroides thetaiotaomicron (strain ATCC 29148 / DSM 2079 / JCM 5827 / CCUG 10774 / NCTC 10582 / VPI-5482 / E50) protein is Large ribosomal subunit protein bL17.